We begin with the raw amino-acid sequence, 1081 residues long: MPRRKQEQPKRLPSHVSRQEEAEGELSEGEHWYGNSSETPSEASFGEVQENYKLSLEDRIQEQSTSPDTSLGSTTPSSHTLELVALDGEVLRDSLQCQDHLSPGVSSLCDDDPGSNKPLSSNLRRLLEAGSLKLDAVATANGRVESPVNVGSNLSFSPPSHHAQQLSVLARKLAEKQEQNDQYTPSNRFIWNQGKWLPNSTTTCSLSPDSAILKLKAAANAVLQDKSLTRTEETMRFESFSSPFSSQSASSTLAALSKKVSERSLTPGQEHPPPASSFLSLAPMTSSAALLKEVAARAAGSLLAEKSSLLPEDPLPPPPSEKKPEKVSPPPPPPPPPPPPPPPQSLELLLLPVPKGRVSKPSNSASEEESGKPFQCPICGLVIKRKSYWKRHMVIHTGLKSHQCPLCPFRCARKDNLKSHMKVHQHQDRGETFQCQLCPFTSSRHFSLKLHMRCHQHFLRTEAKVKEEIPDPDVKGSPHLSDSACLGQQREGGGTELVGTMMTSNTPERTSQGGAGVSPLLVKEEPKEDNGLPTSFTLNTADRPANHTKLKDPSEYVANSASALFSQDISVKMASDFLMKLSAANQKEPMNLNFKVKEEPKEGESLSTTLPRSSYVFSPESEVSTPGVSEDALKPQEGKGNVLRRDVSVKAASELLMKLSAESYKETQMVKIKEEPMEVDIQDSHVSISPSRNVGYSTLIGREKTEPLQKMPEGRVPPERNLFSQDISVKMASELLFQLSEKVSKEHNHTKENTIRTTTSPFFSEDTFRQSPFTSNSKELLPSESVLHGRISAPETEKIVLEAGNGLPSWKFNDQLFPCDVCGKVFGRQQTLSRHLSLHTEERKYKCHLCPYAAKCRANLNQHLTVHSVKLVSTDTEDIVSAVTSEGSDGKKHPYYYSCHVCGFETELNVQFVSHMSLHVDKEQWMFSICCTACDFVTMEEAEIKTHIGTKHTGEDRKTPSESNSPSSSSLSALSDSANSKDDSDGSQKNKGGNNLLVVSVMPGSQPSLNSEEKPEKGFECVFCNFVCKTKNMFERHLQIHLITRMFECDVCHKFMKTPEQLLEHKKCHTVPTGGLNSGQW.

Over residues 1–10 (MPRRKQEQPK) the composition is skewed to basic and acidic residues. The interval 1–14 (MPRRKQEQPKRLPS) is mediates direct interaction with RBBP4. The tract at residues 1–77 (MPRRKQEQPK…DTSLGSTTPS (77 aa)) is disordered. Positions 3 to 5 (RRK) match the RRK motif; mediates NuRD recruitment to telomeres motif. Polar residues predominate over residues 62-77 (EQSTSPDTSLGSTTPS). Glycyl lysine isopeptide (Lys-Gly) (interchain with G-Cter in SUMO2) cross-links involve residues lysine 176, lysine 216, and lysine 226. Disordered stretches follow at residues 258–280 (KKVS…SFLS) and 305–348 (EKSS…SLEL). Positions 327–344 (VSPPPPPPPPPPPPPPPQ) are enriched in pro residues. Glycyl lysine isopeptide (Lys-Gly) (interchain with G-Cter in SUMO2) cross-links involve residues lysine 360 and lysine 372. 3 consecutive C2H2-type zinc fingers follow at residues 374–396 (FQCP…MVIH), 402–424 (HQCP…MKVH), and 433–455 (FQCQ…MRCH). Residues lysine 466, lysine 475, lysine 523, lysine 549, lysine 580, lysine 587, and lysine 597 each participate in a glycyl lysine isopeptide (Lys-Gly) (interchain with G-Cter in SUMO2) cross-link. The segment at 525–553 (EPKEDNGLPTSFTLNTADRPANHTKLKDP) is disordered. Positions 616 to 627 (VFSPESEVSTPG) are enriched in polar residues. A disordered region spans residues 616–640 (VFSPESEVSTPGVSEDALKPQEGKG). Residues 631–640 (DALKPQEGKG) show a composition bias toward basic and acidic residues. Residues lysine 634, lysine 639, and lysine 658 each participate in a glycyl lysine isopeptide (Lys-Gly) (interchain with G-Cter in SUMO2) cross-link. Lysine 673 is covalently cross-linked (Glycyl lysine isopeptide (Lys-Gly) (interchain with G-Cter in SUMO1); alternate). Lysine 673 is covalently cross-linked (Glycyl lysine isopeptide (Lys-Gly) (interchain with G-Cter in SUMO2); alternate). Residues lysine 704, lysine 710, lysine 742, lysine 778, and lysine 798 each participate in a glycyl lysine isopeptide (Lys-Gly) (interchain with G-Cter in SUMO2) cross-link. C2H2-type zinc fingers lie at residues 817–839 (FPCD…LSLH) and 845–867 (YKCH…LTVH). Residues lysine 870 and lysine 891 each participate in a glycyl lysine isopeptide (Lys-Gly) (interchain with G-Cter in SUMO2) cross-link. C2H2-type zinc fingers lie at residues 897 to 919 (YSCH…MSLH) and 929 to 952 (ICCT…GTKH). Residues 947–960 (HIGTKHTGEDRKTP) show a composition bias toward basic and acidic residues. Residues 947–1013 (HIGTKHTGED…GSQPSLNSEE (67 aa)) are disordered. Lysine 958 is covalently cross-linked (Glycyl lysine isopeptide (Lys-Gly) (interchain with G-Cter in SUMO2)). Positions 961–978 (SESNSPSSSSLSALSDSA) are enriched in low complexity. Over residues 979–988 (NSKDDSDGSQ) the composition is skewed to basic and acidic residues. Residue lysine 1014 forms a Glycyl lysine isopeptide (Lys-Gly) (interchain with G-Cter in SUMO2) linkage. 2 C2H2-type zinc fingers span residues 1019–1041 (FECV…LQIH) and 1047–1069 (FECD…KKCH).

The protein belongs to the krueppel C2H2-type zinc-finger protein family. As to quaternary structure, part of a transcription inhibitory ribonucleoprotein complex composed at least of the circular RNA circZNF827, HNRNPK and HNRNPL. Interacts with the nucleosome remodeling and histone deacetylase/NuRD complex. Interacts with RBBP4; the interaction is direct and recruits RBBP4, a component of the NuRD complex, to telomeres.

The protein resides in the nucleus. It localises to the chromosome. The protein localises to the telomere. In terms of biological role, as part of a ribonucleoprotein complex composed at least of HNRNPK, HNRNPL and the circular RNA circZNF827 that nucleates the complex on chromatin, may negatively regulate the transcription of genes involved in neuronal differentiation. Could also recruit the nucleosome remodeling and histone deacetylase/NuRD complex to telomeric regions of chromosomes to regulate chromatin remodeling as part of telomere maintenance. The chain is Zinc finger protein 827 (ZNF827) from Macaca fascicularis (Crab-eating macaque).